We begin with the raw amino-acid sequence, 153 residues long: Nitrogen regulatory protein (153 aa).

The PTS EIIA type-2 domain maps to 5 to 148 (DLVAPEAILP…QAIYSVLALP (144 aa)). The active-site Tele-phosphohistidine intermediate is His66.

It localises to the cytoplasm. Its function is as follows. Seems to have a role in regulating nitrogen assimilation. The chain is Nitrogen regulatory protein (ptsN) from Bradyrhizobium diazoefficiens (strain JCM 10833 / BCRC 13528 / IAM 13628 / NBRC 14792 / USDA 110).